Consider the following 182-residue polypeptide: ATP-dependent protease subunit HslV (182 aa).

The active site involves Thr-7. Na(+)-binding residues include Gly-162, Cys-165, and Thr-168.

It belongs to the peptidase T1B family. HslV subfamily. As to quaternary structure, a double ring-shaped homohexamer of HslV is capped on each side by a ring-shaped HslU homohexamer. The assembly of the HslU/HslV complex is dependent on binding of ATP.

The protein localises to the cytoplasm. It carries out the reaction ATP-dependent cleavage of peptide bonds with broad specificity.. Allosterically activated by HslU binding. Its function is as follows. Protease subunit of a proteasome-like degradation complex believed to be a general protein degrading machinery. This chain is ATP-dependent protease subunit HslV, found in Legionella pneumophila subsp. pneumophila (strain Philadelphia 1 / ATCC 33152 / DSM 7513).